A 407-amino-acid chain; its full sequence is Argininosuccinate synthase (407 aa).

Residues 16–24 and Ala-44 each bind ATP; that span reads AYSGGLDTS. The L-citrulline site is built by Tyr-96 and Ser-101. Gly-126 lines the ATP pocket. L-aspartate is bound by residues Thr-128, Asn-132, and Asp-133. Asn-132 provides a ligand contact to L-citrulline. Residues Arg-136, Ser-185, Ser-194, Glu-270, and Tyr-282 each coordinate L-citrulline.

This sequence belongs to the argininosuccinate synthase family. Type 1 subfamily. In terms of assembly, homotetramer.

Its subcellular location is the cytoplasm. The enzyme catalyses L-citrulline + L-aspartate + ATP = 2-(N(omega)-L-arginino)succinate + AMP + diphosphate + H(+). It functions in the pathway amino-acid biosynthesis; L-arginine biosynthesis; L-arginine from L-ornithine and carbamoyl phosphate: step 2/3. The chain is Argininosuccinate synthase from Shewanella oneidensis (strain ATCC 700550 / JCM 31522 / CIP 106686 / LMG 19005 / NCIMB 14063 / MR-1).